Consider the following 320-residue polypeptide: HPr kinase/phosphorylase (320 aa).

Active-site residues include H141 and K162. An ATP-binding site is contributed by 156 to 163; that stretch reads GHSGLGKS. S163 lines the Mg(2+) pocket. The active-site Proton acceptor; for phosphorylation activity. Proton donor; for dephosphorylation activity is the D180. Positions 204–213 are important for the catalytic mechanism of both phosphorylation and dephosphorylation; it reads LEVRGLGILN. E205 contributes to the Mg(2+) binding site. The active site involves R248. The interval 269 to 274 is important for the catalytic mechanism of dephosphorylation; it reads PVAVGR.

Belongs to the HPrK/P family. In terms of assembly, homohexamer. Mg(2+) serves as cofactor.

It catalyses the reaction [HPr protein]-L-serine + ATP = [HPr protein]-O-phospho-L-serine + ADP + H(+). The catalysed reaction is [HPr protein]-O-phospho-L-serine + phosphate + H(+) = [HPr protein]-L-serine + diphosphate. Catalyzes the ATP- as well as the pyrophosphate-dependent phosphorylation of a specific serine residue in HPr, a phosphocarrier protein of the phosphoenolpyruvate-dependent sugar phosphotransferase system (PTS). HprK/P also catalyzes the pyrophosphate-producing, inorganic phosphate-dependent dephosphorylation (phosphorolysis) of seryl-phosphorylated HPr (P-Ser-HPr). The polypeptide is HPr kinase/phosphorylase (Neisseria meningitidis serogroup A / serotype 4A (strain DSM 15465 / Z2491)).